The sequence spans 120 residues: Prophage bactoprenol-linked glucose translocase homolog (120 aa).

At 1–9 the chain is on the cytoplasmic side; sequence MLKLFAKYT. The chain crosses the membrane as a helical span at residues 10–30; that stretch reads SIGVLNTLIHWVVFGVCIYVA. Over 31–33 the chain is Periplasmic; it reads HTN. The helical transmembrane segment at 34 to 54 threads the bilayer; that stretch reads QALANFAGFVVAVSFSFFANA. The Cytoplasmic segment spans residues 55–64; it reads KFTFKASTTT. Residues 65–85 traverse the membrane as a helical segment; it reads MRYMLYVGFMGTLSATVGWAA. The Periplasmic segment spans residues 86-88; it reads DRC. Residues 89–109 form a helical membrane-spanning segment; that stretch reads ALPPMITLVTFSAISLVCGFV. The Cytoplasmic segment spans residues 110–120; that stretch reads YSKFIVFRDAK.

It belongs to the GtrA family.

It localises to the cell inner membrane. Its function is as follows. Involved in O antigen modification. Involved in the translocation of bactoprenol-linked glucose across the cytoplasmic membrane. In Escherichia coli (strain K12), this protein is Prophage bactoprenol-linked glucose translocase homolog (yfdG).